The primary structure comprises 451 residues: Trimethylamine monooxygenase (451 aa).

6 residues coordinate FAD: Ser-12, Glu-37, Gln-39, Leu-45, Trp-46, and His-62. Trp-70 and Asn-72 together coordinate NADP(+). FAD is bound by residues Asn-72 and Val-125. Residues Ser-204, Ser-205, Ser-207, and Arg-228 each contribute to the NADP(+) site. FAD contacts are provided by Gln-317 and Thr-320. Position 411 (Arg-411) interacts with NADP(+).

It belongs to the FMO family. The cofactor is FAD.

The enzyme catalyses trimethylamine + NADPH + O2 = trimethylamine N-oxide + NADP(+) + H2O. Catalyzes the oxidation of trimethylamine (TMA) to produce trimethylamine N-oxide (TMAO). In vitro, has a broad substrate specificity, oxidizing many nitrogen- and sulfur-containing compounds, including dimethylamine (DMA), dimethylsulfide (DMS), dimethylsulfoxide (DMSO), cysteamine, methimazole and dimethylaniline. This is Trimethylamine monooxygenase from Methylocella silvestris (strain DSM 15510 / CIP 108128 / LMG 27833 / NCIMB 13906 / BL2).